The following is a 731-amino-acid chain: Fatty acid oxidation complex subunit alpha (731 aa).

Positions 15–204 (TEKTSAFSLT…RQGLVDEAVP (190 aa)) are enoyl-CoA hydratase. The tract at residues 320-729 (KPIHRVGILG…FYPPADKDNS (410 aa)) is 3-hydroxyacyl-CoA dehydrogenase.

This sequence in the N-terminal section; belongs to the enoyl-CoA hydratase/isomerase family. In the central section; belongs to the 3-hydroxyacyl-CoA dehydrogenase family. Heterotetramer of two alpha chains (FadJ) and two beta chains (FadI).

The protein resides in the cytoplasm. It catalyses the reaction a (3S)-3-hydroxyacyl-CoA = a (2E)-enoyl-CoA + H2O. The enzyme catalyses a 4-saturated-(3S)-3-hydroxyacyl-CoA = a (3E)-enoyl-CoA + H2O. The catalysed reaction is a (3S)-3-hydroxyacyl-CoA + NAD(+) = a 3-oxoacyl-CoA + NADH + H(+). It carries out the reaction (3S)-3-hydroxybutanoyl-CoA = (3R)-3-hydroxybutanoyl-CoA. The protein operates within lipid metabolism; fatty acid beta-oxidation. In terms of biological role, catalyzes the formation of a hydroxyacyl-CoA by addition of water on enoyl-CoA. Also exhibits 3-hydroxyacyl-CoA epimerase and 3-hydroxyacyl-CoA dehydrogenase activities. This is Fatty acid oxidation complex subunit alpha from Pectobacterium atrosepticum (strain SCRI 1043 / ATCC BAA-672) (Erwinia carotovora subsp. atroseptica).